A 296-amino-acid chain; its full sequence is Light-independent protochlorophyllide reductase iron-sulfur ATP-binding protein (296 aa).

Positions 1-20 (MTTTLSRPTDGEGSVQVQQD) are disordered. ATP contacts are provided by residues 39-44 (GIGKST) and K68. S43 serves as a coordination point for Mg(2+). The [4Fe-4S] cluster site is built by C124 and C158. 209 to 210 (NR) lines the ATP pocket.

It belongs to the NifH/BchL/ChlL family. Homodimer. Protochlorophyllide reductase is composed of three subunits; ChlL, ChlN and ChlB. [4Fe-4S] cluster serves as cofactor.

It carries out the reaction chlorophyllide a + oxidized 2[4Fe-4S]-[ferredoxin] + 2 ADP + 2 phosphate = protochlorophyllide a + reduced 2[4Fe-4S]-[ferredoxin] + 2 ATP + 2 H2O. The protein operates within porphyrin-containing compound metabolism; chlorophyll biosynthesis (light-independent). Its function is as follows. Component of the dark-operative protochlorophyllide reductase (DPOR) that uses Mg-ATP and reduced ferredoxin to reduce ring D of protochlorophyllide (Pchlide) to form chlorophyllide a (Chlide). This reaction is light-independent. The L component serves as a unique electron donor to the NB-component of the complex, and binds Mg-ATP. The polypeptide is Light-independent protochlorophyllide reductase iron-sulfur ATP-binding protein (Synechococcus sp. (strain CC9902)).